The primary structure comprises 324 residues: BURP domain-containing protein 5 (324 aa).

A signal peptide spans 1-30 (MCATLCTLLDEISILILMLLLIQLEIRVSA). Positions 109 to 323 (FFLETNLQSS…QPDVVVWTRR (215 aa)) constitute a BURP domain.

Expressed in panicles.

This chain is BURP domain-containing protein 5 (BURP5), found in Oryza sativa subsp. japonica (Rice).